A 72-amino-acid polypeptide reads, in one-letter code: Gas vesicle protein A (72 aa).

Belongs to the gas vesicle GvpA family. In terms of assembly, the gas vesicle shell is 2 nm thick and consists of a single layer of this protein. It forms helical ribs nearly perpendicular to the long axis of the vesicle.

Its subcellular location is the gas vesicle shell. Its function is as follows. Gas vesicles are hollow, gas filled proteinaceous nanostructures found in some microorganisms. During planktonic growth they allow positioning of the organism at a favorable depth for light or nutrient acquisition. GvpA forms the protein shell. The protein is Gas vesicle protein A of Haloquadratum walsbyi (strain DSM 16790 / HBSQ001).